Consider the following 295-residue polypeptide: Tyrosine recombinase XerD (295 aa).

In terms of domain architecture, Core-binding (CB) spans 1–85; the sequence is MNTIIEEYLN…TIRSFHQFAL (85 aa). One can recognise a Tyr recombinase domain in the interval 106-289; that stretch reads KLPDVLEIDE…SKSQIRKMYT (184 aa). Residues R146, K170, H241, R244, and H267 contribute to the active site. Y276 functions as the O-(3'-phospho-DNA)-tyrosine intermediate in the catalytic mechanism.

This sequence belongs to the 'phage' integrase family. XerD subfamily. In terms of assembly, forms a cyclic heterotetrameric complex composed of two molecules of XerC and two molecules of XerD.

The protein resides in the cytoplasm. Its function is as follows. Site-specific tyrosine recombinase, which acts by catalyzing the cutting and rejoining of the recombining DNA molecules. The XerC-XerD complex is essential to convert dimers of the bacterial chromosome into monomers to permit their segregation at cell division. It also contributes to the segregational stability of plasmids. The chain is Tyrosine recombinase XerD from Staphylococcus epidermidis (strain ATCC 12228 / FDA PCI 1200).